The primary structure comprises 379 residues: Cytokine receptor common subunit gamma (379 aa).

The signal sequence occupies residues methionine 1–glycine 22. The Extracellular portion of the chain corresponds to leucine 23–serine 269. A disulfide bridge links cysteine 68 with cysteine 78. Residues asparagine 77, asparagine 81, and asparagine 90 are each glycosylated (N-linked (GlcNAc...) asparagine). The cysteines at positions 109 and 122 are disulfide-linked. Residues alanine 163–glutamate 260 enclose the Fibronectin type-III domain. Asparagine 166 and asparagine 171 each carry an N-linked (GlcNAc...) asparagine glycan. The short motif at tryptophan 244–serine 248 is the WSXWS motif element. The chain crosses the membrane as a helical span at residues leucine 270–isoleucine 290. Over cysteine 291 to proline 379 the chain is Cytoplasmic. The short motif at threonine 299 to lysine 307 is the Box 1 motif element. Threonine 305 carries the phosphothreonine modification. The segment at proline 349–proline 370 is disordered.

The protein belongs to the type I cytokine receptor family. Type 5 subfamily. As to quaternary structure, the gamma subunit is common to the IL2, IL4, IL7, IL15, IL21 and probably also the IL13 receptors. Interacts with SHB upon interleukin stimulation.

Its subcellular location is the cell membrane. It localises to the cell surface. Functionally, common subunit for the receptors for a variety of interleukins. Probably in association with IL15RA, involved in the stimulation of neutrophil phagocytosis by IL15. In Bos taurus (Bovine), this protein is Cytokine receptor common subunit gamma (IL2RG).